Here is a 370-residue protein sequence, read N- to C-terminus: Probable G-protein coupled receptor 85 (370 aa).

The Extracellular portion of the chain corresponds to 1–25 (MANYSHAADNILQNLSPLTAFLKLT). Asn3 carries an N-linked (GlcNAc...) asparagine glycan. Residues 26-46 (SLGFIIGVSVVGNLLISILLV) form a helical membrane-spanning segment. Residues 47-57 (KDKTLHRAPYY) lie on the Cytoplasmic side of the membrane. The chain crosses the membrane as a helical span at residues 58–78 (FLLDLCCSDILRSAICFPFVF). The Extracellular segment spans residues 79 to 96 (NSVKNGSTWTYGTLTCKV). Asn83 carries N-linked (GlcNAc...) asparagine glycosylation. An intrachain disulfide couples Cys94 to Cys172. The chain crosses the membrane as a helical span at residues 97–117 (IAFLGVLSCFHTAFMLFCISV). Over 118–137 (TRYLAIAHHRFYTKRLTFWT) the chain is Cytoplasmic. The helical transmembrane segment at 138–158 (CLAVICMVWTLSVAMAFPPVL) threads the bilayer. Residues 159–188 (DVGTYSFIREEDQCTFQHRSFRANDSLGFM) lie on the Extracellular side of the membrane. A glycan (N-linked (GlcNAc...) asparagine) is linked at Asn182. The helical transmembrane segment at 189–209 (LLLALILLATQLVYLKLIFFV) threads the bilayer. The Cytoplasmic segment spans residues 210 to 286 (HDRRKMKPVQ…FKMEKRISRM (77 aa)). The helical transmembrane segment at 287–307 (FYIMTFLFLTLWGPYLVACYW) threads the bilayer. The Extracellular portion of the chain corresponds to 308–313 (RVFARG). The helical transmembrane segment at 314 to 334 (PVVPGGFLTAAVWMSFAQAGI) threads the bilayer. The Cytoplasmic portion of the chain corresponds to 335–370 (NPFVCIFSNRELRRCFSTTLLYCRKSRLPREPYCVI).

Belongs to the G-protein coupled receptor 1 family. Interacts with DLG4 and DLG3. As to expression, highly expressed in brain and testis. Lower levels in small intestine, placenta and spleen. In brain regions, detected in all regions tested, but somewhat lower levels in the corpus callosum, medulla and spinal cord.

It localises to the cell membrane. The protein resides in the endoplasmic reticulum. Functionally, orphan receptor. The chain is Probable G-protein coupled receptor 85 (GPR85) from Homo sapiens (Human).